The sequence spans 607 residues: Elongation factor 4 (607 aa).

The tr-type G domain occupies 11-193 (KKIRNFSIIA…QIVELVPPPT (183 aa)). GTP-binding positions include 23 to 28 (DHGKST) and 140 to 143 (NKID).

The protein belongs to the TRAFAC class translation factor GTPase superfamily. Classic translation factor GTPase family. LepA subfamily.

The protein localises to the cell membrane. It carries out the reaction GTP + H2O = GDP + phosphate + H(+). Its function is as follows. Required for accurate and efficient protein synthesis under certain stress conditions. May act as a fidelity factor of the translation reaction, by catalyzing a one-codon backward translocation of tRNAs on improperly translocated ribosomes. Back-translocation proceeds from a post-translocation (POST) complex to a pre-translocation (PRE) complex, thus giving elongation factor G a second chance to translocate the tRNAs correctly. Binds to ribosomes in a GTP-dependent manner. The polypeptide is Elongation factor 4 (Exiguobacterium sp. (strain ATCC BAA-1283 / AT1b)).